The following is a 923-amino-acid chain: Isoleucine--tRNA ligase (923 aa).

Residues 57–67 (PYANGHIHIGH) carry the 'HIGH' region motif. An L-isoleucyl-5'-AMP-binding site is contributed by glutamate 560. A 'KMSKS' region motif is present at residues 601–605 (KMSKS). An ATP-binding site is contributed by lysine 604. Cysteine 895, cysteine 898, cysteine 915, and cysteine 918 together coordinate Zn(2+).

Belongs to the class-I aminoacyl-tRNA synthetase family. IleS type 1 subfamily. In terms of assembly, monomer. Zn(2+) is required as a cofactor.

It localises to the cytoplasm. It catalyses the reaction tRNA(Ile) + L-isoleucine + ATP = L-isoleucyl-tRNA(Ile) + AMP + diphosphate. Catalyzes the attachment of isoleucine to tRNA(Ile). As IleRS can inadvertently accommodate and process structurally similar amino acids such as valine, to avoid such errors it has two additional distinct tRNA(Ile)-dependent editing activities. One activity is designated as 'pretransfer' editing and involves the hydrolysis of activated Val-AMP. The other activity is designated 'posttransfer' editing and involves deacylation of mischarged Val-tRNA(Ile). In Geobacter sulfurreducens (strain ATCC 51573 / DSM 12127 / PCA), this protein is Isoleucine--tRNA ligase.